We begin with the raw amino-acid sequence, 392 residues long: Succinyl-diaminopimelate desuccinylase (392 aa).

H77 contributes to the Zn(2+) binding site. The active site involves D79. Residue D110 coordinates Zn(2+). Residue E144 is the Proton acceptor of the active site. Residues E145, E173, and H359 each coordinate Zn(2+).

The protein belongs to the peptidase M20A family. DapE subfamily. Homodimer. It depends on Zn(2+) as a cofactor. Requires Co(2+) as cofactor.

It catalyses the reaction N-succinyl-(2S,6S)-2,6-diaminopimelate + H2O = (2S,6S)-2,6-diaminopimelate + succinate. It participates in amino-acid biosynthesis; L-lysine biosynthesis via DAP pathway; LL-2,6-diaminopimelate from (S)-tetrahydrodipicolinate (succinylase route): step 3/3. Functionally, catalyzes the hydrolysis of N-succinyl-L,L-diaminopimelic acid (SDAP), forming succinate and LL-2,6-diaminopimelate (DAP), an intermediate involved in the bacterial biosynthesis of lysine and meso-diaminopimelic acid, an essential component of bacterial cell walls. The sequence is that of Succinyl-diaminopimelate desuccinylase from Thiobacillus denitrificans (strain ATCC 25259 / T1).